We begin with the raw amino-acid sequence, 447 residues long: UDP-N-acetylmuramate--L-alanine ligase (447 aa).

Position 108-114 (108-114 (GSHGKTS)) interacts with ATP.

This sequence belongs to the MurCDEF family.

Its subcellular location is the cytoplasm. The catalysed reaction is UDP-N-acetyl-alpha-D-muramate + L-alanine + ATP = UDP-N-acetyl-alpha-D-muramoyl-L-alanine + ADP + phosphate + H(+). It functions in the pathway cell wall biogenesis; peptidoglycan biosynthesis. Functionally, cell wall formation. The protein is UDP-N-acetylmuramate--L-alanine ligase of Listeria welshimeri serovar 6b (strain ATCC 35897 / DSM 20650 / CCUG 15529 / CIP 8149 / NCTC 11857 / SLCC 5334 / V8).